The sequence spans 94 residues: Evasin P1104 (94 aa).

A signal peptide spans M1–A28. 3 disulfides stabilise this stretch: C48–C66, C52–C68, and C62–C79. N51 carries N-linked (GlcNAc...) asparagine glycosylation.

The protein localises to the secreted. In terms of biological role, salivary chemokine-binding protein which binds to host chemokines CXCL1, CXCL2, CXCL3, CXCL5, CXCL6, CXCL12 and CXCL13. The chain is Evasin P1104 from Ixodes ricinus (Common tick).